The following is a 161-amino-acid chain: Small ribosomal subunit protein uS15 (161 aa).

Basic residues predominate over residues 1-13 (MAGKRRKKGRSHS). Residues 1–22 (MAGKRRKKGRSHSTRPATPTVP) form a disordered region.

The protein belongs to the universal ribosomal protein uS15 family. Part of the 30S ribosomal subunit.

This chain is Small ribosomal subunit protein uS15, found in Hyperthermus butylicus (strain DSM 5456 / JCM 9403 / PLM1-5).